Consider the following 133-residue polypeptide: Large ribosomal subunit protein bL19 (133 aa).

The disordered stretch occupies residues 114 to 133; that stretch reads IAERQMTAASKEEPAEKSEA. The segment covering 123-133 has biased composition (basic and acidic residues); sequence SKEEPAEKSEA.

Belongs to the bacterial ribosomal protein bL19 family.

Functionally, this protein is located at the 30S-50S ribosomal subunit interface and may play a role in the structure and function of the aminoacyl-tRNA binding site. This is Large ribosomal subunit protein bL19 from Phenylobacterium zucineum (strain HLK1).